Here is a 145-residue protein sequence, read N- to C-terminus: Sporulation-specific cell division protein Francci3_3418 (145 aa).

The protein belongs to the SsgA family.

Its subcellular location is the cell septum. Involved in sporulation-specific cell division. This chain is Sporulation-specific cell division protein Francci3_3418, found in Frankia casuarinae (strain DSM 45818 / CECT 9043 / HFP020203 / CcI3).